An 855-amino-acid polypeptide reads, in one-letter code: Leucine--tRNA ligase (855 aa).

A 'HIGH' region motif is present at residues 45 to 55 (PYPSGRLHMGH). A 'KMSKS' region motif is present at residues 619-623 (KMSKS). Lysine 622 contributes to the ATP binding site.

Belongs to the class-I aminoacyl-tRNA synthetase family.

The protein localises to the cytoplasm. The enzyme catalyses tRNA(Leu) + L-leucine + ATP = L-leucyl-tRNA(Leu) + AMP + diphosphate. This Hyphomonas neptunium (strain ATCC 15444) protein is Leucine--tRNA ligase.